A 149-amino-acid polypeptide reads, in one-letter code: MECVPQILVDADACPVKAEIKQVAKEFQLEVTFVASFNHYSVNTNGENWIFVDTGKESADMRMMNLAKKGDIIVTQDIGLASILLAKGTFVFSNRGELYREEEMSLMLDIRYRHAKERQQGKYSKGPKAMSDQDRSLFKDRLTTFLQNK.

This sequence belongs to the UPF0178 family.

In Listeria monocytogenes serovar 1/2a (strain ATCC BAA-679 / EGD-e), this protein is UPF0178 protein Lmo1456.